Reading from the N-terminus, the 366-residue chain is Alanine racemase (366 aa).

The active-site Proton acceptor; specific for D-alanine is Lys40. N6-(pyridoxal phosphate)lysine is present on Lys40. Substrate is bound at residue Arg136. Tyr263 acts as the Proton acceptor; specific for L-alanine in catalysis. Position 310 (Met310) interacts with substrate.

This sequence belongs to the alanine racemase family. It depends on pyridoxal 5'-phosphate as a cofactor.

It catalyses the reaction L-alanine = D-alanine. The protein operates within amino-acid biosynthesis; D-alanine biosynthesis; D-alanine from L-alanine: step 1/1. Catalyzes the interconversion of L-alanine and D-alanine. May also act on other amino acids. This Streptococcus pyogenes serotype M28 (strain MGAS6180) protein is Alanine racemase (alr).